The sequence spans 551 residues: E3 ubiquitin-protein ligase TRIM8 (551 aa).

Residues 15–56 (CPICLHVFVEPVQLPCKHNFCRGCIGEAWAKDSGLVRCPECN) form an RING-type zinc finger. 2 consecutive B box-type zinc fingers follow at residues 92 to 132 (CVFC…ARGH) and 140 to 182 (VRAW…VCDV). A coiled-coil region spans residues 181–249 (DVEIRRNEIR…HQLLDEDLRQ (69 aa)).

Belongs to the TRIM/RBCC family. As to quaternary structure, homodimer. Interacts with SOCS1 (via) SH2 domain and SOCS box. Interacts with HSP90AB1; prevents nucleus translocation of phosphorylated STAT3 and HSP90AB1. Interacts with MAP3K7/TAK1. Interacts with PIAS3. Interacts with TICAM1. Interacts with TRIM15; this interaction prevents TRIM8 cytoplasmic translocation. As to expression, widely expressed. Expressed in glomerular podocytes of kidneys.

It localises to the cytoplasm. The protein localises to the nucleus. It is found in the nuclear body. The catalysed reaction is S-ubiquitinyl-[E2 ubiquitin-conjugating enzyme]-L-cysteine + [acceptor protein]-L-lysine = [E2 ubiquitin-conjugating enzyme]-L-cysteine + N(6)-ubiquitinyl-[acceptor protein]-L-lysine.. The protein operates within protein modification; protein ubiquitination. Its function is as follows. E3 ubiquitin-protein ligase that participates in multiple biological processes including cell survival, differentiation, apoptosis, and in particular, the innate immune response. Participates in the activation of interferon-gamma signaling by promoting proteasomal degradation of the repressor SOCS1. Plays a positive role in the TNFalpha and IL-1beta signaling pathways. Mechanistically, induces the 'Lys-63'-linked polyubiquitination of MAP3K7/TAK1 component leading to the activation of NF-kappa-B. Also modulates STAT3 activity through negative regulation of PIAS3, either by degradation of PIAS3 through the ubiquitin-proteasome pathway or exclusion of PIAS3 from the nucleus. Negatively regulates TLR3/4-mediated innate immune response by catalyzing 'Lys-6'- and 'Lys-33'-linked polyubiquitination of TICAM1 and thereby disrupting the TICAM1-TBK1 interaction. This chain is E3 ubiquitin-protein ligase TRIM8 (TRIM8), found in Homo sapiens (Human).